The chain runs to 357 residues: MTEITAAMVKELRESTGAGMMDCKNALSETNGDFDKAVQLLREKGLGKAAKKADRLAAEGLVSVKVSDDFTSATVSEINSETDFVAKNDQFIALTKDTTAHIQSNSLQSVEELHSSTINGVKFEEYLKSQIATIGENLVVRRFATLKAGANGVVNGYIHTNGRVGVVIAAACDSAEVASKSRDLLRQICMHIAAMRPSYLSYEDLDMTFVENEYKALVAELEKENEERRRLKDPNKPEHKIPQFASRKQLSDAILKEAEEKIKEELKAQGKPEKIWDNIIPGKMNSFIADNSQLDSKLTLMGQFYVMDDKKTVEQVIAEKEKEFGGKIKIVEFICFEVGEGLEKKTEDFAAEVAAQL.

The interval 82–85 is involved in Mg(2+) ion dislocation from EF-Tu; it reads TDFV.

This sequence belongs to the EF-Ts family.

The protein resides in the cytoplasm. In terms of biological role, associates with the EF-Tu.GDP complex and induces the exchange of GDP to GTP. It remains bound to the aminoacyl-tRNA.EF-Tu.GTP complex up to the GTP hydrolysis stage on the ribosome. The protein is Elongation factor Ts of Campylobacter jejuni subsp. jejuni serotype O:2 (strain ATCC 700819 / NCTC 11168).